The primary structure comprises 426 residues: Proline--tRNA ligase (426 aa).

This sequence belongs to the class-II aminoacyl-tRNA synthetase family. ProS type 2 subfamily. As to quaternary structure, homodimer.

The protein resides in the cytoplasm. The enzyme catalyses tRNA(Pro) + L-proline + ATP = L-prolyl-tRNA(Pro) + AMP + diphosphate. Its function is as follows. Catalyzes the attachment of proline to tRNA(Pro) in a two-step reaction: proline is first activated by ATP to form Pro-AMP and then transferred to the acceptor end of tRNA(Pro). This is Proline--tRNA ligase from Rickettsia peacockii (strain Rustic).